The sequence spans 102 residues: Large ribosomal subunit protein bL21 (102 aa).

It belongs to the bacterial ribosomal protein bL21 family. In terms of assembly, part of the 50S ribosomal subunit. Contacts protein L20.

This protein binds to 23S rRNA in the presence of protein L20. The chain is Large ribosomal subunit protein bL21 from Lawsonia intracellularis.